Consider the following 625-residue polypeptide: Grainyhead-like protein 2 homolog (625 aa).

3 disordered regions span residues 1–24 (MSQE…PPFN), 82–112 (VSKA…GGEN), and 428–453 (EERK…SDGK). A transcription activation region spans residues 1–93 (MSQESDNNKR…KASDSQEDQE (93 aa)). Composition is skewed to polar residues over residues 98–109 (LGTSEAQSNLSG) and 440–451 (QASQTQCNSSSD). In terms of domain architecture, Grh/CP2 DB spans 244–482 (SSGTFQYTLE…DLHSQPVLFI (239 aa)).

The protein belongs to the grh/CP2 family. Grainyhead subfamily. In terms of assembly, homodimer, also forms heterodimers with GRHL1 or GRHL3. As to expression, expressed in keratinocytes (at protein level). Highly expressed in placenta, prostate, brain and kidney. Lower-level expression in a variety of epithelial tissues such as thymus, lung, salivary gland, mammary gland and digestive tract. Expressed in the cochlear. Expressed in corneal epithelial cells, but not in the endothelium or stroma.

The protein resides in the nucleus. It is found in the membrane. Its function is as follows. Transcription factor playing an important role in primary neurulation and in epithelial development. Binds directly to the consensus DNA sequence 5'-AACCGGTT-3' acting as an activator and repressor on distinct target genes. During embryogenesis, plays unique and cooperative roles with GRHL3 in establishing distinct zones of primary neurulation. Essential for closure 3 (rostral end of the forebrain), functions cooperatively with GRHL3 in closure 2 (forebrain/midbrain boundary) and posterior neuropore closure. Regulates epithelial morphogenesis acting as a target gene-associated transcriptional activator of apical junctional complex components. Up-regulates of CLDN3 and CLDN4, as well as of RAB25, which increases the CLDN4 protein and its localization at tight junctions. Comprises an essential component of the transcriptional machinery that establishes appropriate expression levels of CLDN4 and CDH1 in different types of epithelia. Exhibits functional redundancy with GRHL3 in epidermal morphogenetic events and epidermal wound repair. In lung, forms a regulatory loop with NKX2-1 that coordinates lung epithelial cell morphogenesis and differentiation. In keratinocytes, plays a role in telomerase activation during cellular proliferation, regulates TERT expression by binding to TERT promoter region and inhibiting DNA methylation at the 5'-CpG island, possibly by interfering with DNMT1 enzyme activity. In addition, impairs keratinocyte differentiation and epidermal function by inhibiting the expression of genes clustered at the epidermal differentiation complex (EDC) as well as GRHL1 and GRHL3 through epigenetic mechanisms. The sequence is that of Grainyhead-like protein 2 homolog (GRHL2) from Homo sapiens (Human).